The following is a 552-amino-acid chain: MHCERFLCILRIIGTTLFGVSLLLGITAAYIVGYQFIQTDNYYFSFGLYGAFLASHLIIQSLFAFLEHRKMKKSLETPIKLNKTVALCIAAYQEDPDYLRKCLQSVKRLTYPGIKVVMVIDGNSDDDLYMMDIFSEVMGRDKSATYIWKNNFHEKGPGETDESHKESSQHVTQLVLSSKSVCIMQKWGGKREVMYTAFRALGRSVDYVQVCDSDTMLDPASSVEMVKVLEEDPMVGGVGGDVQILNKYDSWISFLSSVRYWMAFNIERACQSYFGCVQCISGPLGMYRNSLLHEFVEDWYSQEFMGNQCSFGDDRHLTNRVLSLGYATKYTARSKCLTETPIEYLRWLNQQTRWSKSYFREWLYNAMWFHKHHLWMTYEAVITGFFPFFLIATVIQLFYRGKIWNILLFLLTVQLVGLIKSSFASCLRGNIVMVFMSLYSVLYMSSLLPAKMFAIATINKAGWGTSGRKTIVVNFIGLIPVSVWFTILLGGVIFTIYKESKKPFSESKQTVLIVGTLLYACYWVMLLTLYVVLINKCGRRKKGQQYDMVLDV.

Residues 1–11 are Cytoplasmic-facing; it reads MHCERFLCILR. Residues 12 to 32 form a helical membrane-spanning segment; sequence IIGTTLFGVSLLLGITAAYIV. The Extracellular segment spans residues 33-45; the sequence is GYQFIQTDNYYFS. A helical transmembrane segment spans residues 46-66; it reads FGLYGAFLASHLIIQSLFAFL. The Cytoplasmic segment spans residues 67 to 374; the sequence is EHRKMKKSLE…NAMWFHKHHL (308 aa). At Thr-110 the chain carries Phosphothreonine. Lys-190 participates in a covalent cross-link: Glycyl lysine isopeptide (Lys-Gly) (interchain with G-Cter in ubiquitin). Residue Ser-221 is glycosylated (O-linked (GlcNAc) serine). Thr-328 bears the Phosphothreonine mark. Residues 375–395 traverse the membrane as a helical segment; it reads WMTYEAVITGFFPFFLIATVI. Residues 396-402 are Extracellular-facing; it reads QLFYRGK. Residues 403–423 form a helical membrane-spanning segment; the sequence is IWNILLFLLTVQLVGLIKSSF. Residues 424-429 lie on the Cytoplasmic side of the membrane; that stretch reads ASCLRG. A helical transmembrane segment spans residues 430 to 450; that stretch reads NIVMVFMSLYSVLYMSSLLPA. At 451 to 475 the chain is on the extracellular side; sequence KMFAIATINKAGWGTSGRKTIVVNF. Residues 476–496 traverse the membrane as a helical segment; it reads IGLIPVSVWFTILLGGVIFTI. Residues 497–510 are Cytoplasmic-facing; sequence YKESKKPFSESKQT. The helical transmembrane segment at 511-531 threads the bilayer; it reads VLIVGTLLYACYWVMLLTLYV. Over 532 to 552 the chain is Extracellular; it reads VLINKCGRRKKGQQYDMVLDV.

The protein belongs to the NodC/HAS family. In terms of assembly, homodimer; dimerization promotes enzymatic activity. Forms heterodimer with HAS3. Forms heterodimer with HAS1. The cofactor is Mg(2+). Phosphorylation at Thr-328 is essential for hyaluronan synthase activity. Post-translationally, O-GlcNAcylation at Ser-221 increases the stability of HAS2 and plasma membrane localization. In terms of processing, ubiquitination at Lys-190; this ubiquitination is essential for hyaluronan synthase activity and homo- or hetero-oligomerization. Can also be poly-ubiquitinated. Deubiquitinated by USP17L22/USP17 and USP4. USP17L22/USP17 efficiently removes 'Lys-63'- and 'Lys-48'-linked polyubiquitin chains, whereas USP4 preferentially removes monoubiquitination and, partially, both 'Lys-63'- and 'Lys-48'-linked polyubiquitin chain. As to expression, overexpressed in skin fibroblasts.

It is found in the cell membrane. The protein resides in the endoplasmic reticulum membrane. It localises to the vesicle. Its subcellular location is the golgi apparatus membrane. The protein localises to the lysosome. It carries out the reaction [hyaluronan](n) + UDP-N-acetyl-alpha-D-glucosamine = N-acetyl-beta-D-glucosaminyl-(1-&gt;4)-[hyaluronan](n) + UDP + H(+). The enzyme catalyses N-acetyl-beta-D-glucosaminyl-(1-&gt;4)-[hyaluronan](n) + UDP-alpha-D-glucuronate = [hyaluronan](n+1) + UDP + H(+). Its pathway is glycan biosynthesis; hyaluronan biosynthesis. Functionally, catalyzes the addition of GlcNAc or GlcUA monosaccharides to the nascent hyaluronan polymer. Therefore, it is essential to hyaluronan synthesis a major component of most extracellular matrices that has a structural role in tissues architectures and regulates cell adhesion, migration and differentiation. This is one of three isoenzymes responsible for cellular hyaluronan synthesis and it is particularly responsible for the synthesis of high molecular mass hyaluronan. The polypeptide is Hyaluronan synthase 2 (Has2) (Heterocephalus glaber (Naked mole rat)).